Reading from the N-terminus, the 755-residue chain is Atypical kinase coq-8, mitochondrial (755 aa).

A disordered region spans residues 57–78 (QDVDPLKEPNKTNAPLLSPTLP). The span at 67–78 (KTNAPLLSPTLP) shows a compositional bias: polar residues. Residues 435 to 443 (FACASIGQV) and lysine 457 each bind ATP. Residue aspartate 587 is the Proton acceptor of the active site.

Belongs to the protein kinase superfamily. ADCK protein kinase family.

Its subcellular location is the mitochondrion. Its pathway is cofactor biosynthesis; ubiquinone biosynthesis. Atypical kinase involved in the biosynthesis of coenzyme Q, also named ubiquinone, an essential lipid-soluble electron transporter for aerobic cellular respiration. Its substrate specificity is still unclear: may act as a protein kinase that mediates phosphorylation of coq-3. According to other reports, acts as a small molecule kinase, possibly a lipid kinase that phosphorylates a prenyl lipid in the ubiquinone biosynthesis pathway, as suggested by its ability to bind coenzyme Q lipid intermediates. The chain is Atypical kinase coq-8, mitochondrial (coq-8) from Caenorhabditis elegans.